The primary structure comprises 146 residues: Large ribosomal subunit protein uL15 (146 aa).

The segment covering 1–10 (MKLHELKPAE) has biased composition (basic and acidic residues). Positions 1–51 (MKLHELKPAEGSRQVRNRVGRGTSSGNGKTAGRGQKGQKARSGGGVRLGFE) are disordered. Gly residues-rich tracts occupy residues 23 to 35 (TSSG…GRGQ) and 42 to 51 (SGGGVRLGFE).

It belongs to the universal ribosomal protein uL15 family. As to quaternary structure, part of the 50S ribosomal subunit.

Its function is as follows. Binds to the 23S rRNA. The chain is Large ribosomal subunit protein uL15 from Enterococcus faecalis (strain ATCC 700802 / V583).